Consider the following 988-residue polypeptide: Transposase for transposon Tn21 (988 aa).

The disordered stretch occupies residues 672–696; it reads GDGTTSSSDEQNFRTASKAKSTGHI. The span at 674–695 shows a compositional bias: polar residues; sequence GTTSSSDEQNFRTASKAKSTGH.

Belongs to the transposase 7 family.

In terms of biological role, required for transposition of transposon Tn21. This is Transposase for transposon Tn21 (tnpA) from Escherichia coli.